Consider the following 347-residue polypeptide: tRNA N6-adenosine threonylcarbamoyltransferase (347 aa).

Fe cation-binding residues include H109 and H113. Residues 136–140 (TVSGG), D169, G182, D186, and N284 each bind substrate. D312 contacts Fe cation.

It belongs to the KAE1 / TsaD family. Fe(2+) is required as a cofactor.

Its subcellular location is the cytoplasm. It catalyses the reaction L-threonylcarbamoyladenylate + adenosine(37) in tRNA = N(6)-L-threonylcarbamoyladenosine(37) in tRNA + AMP + H(+). Its function is as follows. Required for the formation of a threonylcarbamoyl group on adenosine at position 37 (t(6)A37) in tRNAs that read codons beginning with adenine. Is involved in the transfer of the threonylcarbamoyl moiety of threonylcarbamoyl-AMP (TC-AMP) to the N6 group of A37, together with TsaE and TsaB. TsaD likely plays a direct catalytic role in this reaction. This chain is tRNA N6-adenosine threonylcarbamoyltransferase, found in Chlorobium phaeobacteroides (strain BS1).